The following is a 241-amino-acid chain: 7-cyano-7-deazaguanine synthase (241 aa).

Residue 9 to 19 (LSGGLDSSTVL) participates in ATP binding. Residues Cys189, Cys197, Cys200, and Cys203 each contribute to the Zn(2+) site.

Belongs to the QueC family. Requires Zn(2+) as cofactor.

The catalysed reaction is 7-carboxy-7-deazaguanine + NH4(+) + ATP = 7-cyano-7-deazaguanine + ADP + phosphate + H2O + H(+). It participates in purine metabolism; 7-cyano-7-deazaguanine biosynthesis. Its function is as follows. Catalyzes the ATP-dependent conversion of 7-carboxy-7-deazaguanine (CDG) to 7-cyano-7-deazaguanine (preQ(0)). The chain is 7-cyano-7-deazaguanine synthase from Thermoplasma volcanium (strain ATCC 51530 / DSM 4299 / JCM 9571 / NBRC 15438 / GSS1).